Reading from the N-terminus, the 572-residue chain is Urease subunit alpha (572 aa).

Residues 134 to 572 (AGIDSHIHLI…AAMNQRYFFG (439 aa)) enclose the Urease domain. 3 residues coordinate Ni(2+): His-139, His-141, and Lys-222. Lys-222 is subject to N6-carboxylysine. His-224 contacts substrate. 2 residues coordinate Ni(2+): His-251 and His-277. His-325 serves as the catalytic Proton donor. Asp-365 contacts Ni(2+).

It belongs to the metallo-dependent hydrolases superfamily. Urease alpha subunit family. As to quaternary structure, heterotrimer of UreA (gamma), UreB (beta) and UreC (alpha) subunits. Three heterotrimers associate to form the active enzyme. The cofactor is Ni cation. Carboxylation allows a single lysine to coordinate two nickel ions.

Its subcellular location is the cytoplasm. It carries out the reaction urea + 2 H2O + H(+) = hydrogencarbonate + 2 NH4(+). It participates in nitrogen metabolism; urea degradation; CO(2) and NH(3) from urea (urease route): step 1/1. The sequence is that of Urease subunit alpha from Yersinia enterocolitica serotype O:8 / biotype 1B (strain NCTC 13174 / 8081).